The sequence spans 658 residues: Secretin XcpQ (658 aa).

The signal sequence occupies residues 1-34 (MSQPLLRALFAPSSRSYVPAVLLSLALGIQAAHA). An N0 region spans residues 51-141 (AHWTINLKDA…TEAGGGQSAP (91 aa)). Positions 142-205 (DRLETRVIQV…DVIRQLDQKG (64 aa)) are N1. The segment at 206–279 (SHDYSVINLR…SLDTPTARSA (74 aa)) is N2. The tract at residues 280–365 (NTRVIRLRHN…VPRAQVLVEA (86 aa)) is N3. The interval 302–322 (SEGMKNNGGQGGEQTGGGRPS) is disordered. Gly residues predominate over residues 307-320 (NNGGQGGEQTGGGR). A secretin region spans residues 368 to 606 (VEISGDIQDA…VFLRPTVVRD (239 aa)). A s domain region spans residues 608-658 (AGLAALSGKKYSDIRVIDGTRGPEGRPSILPTNANQLFDGQAVDLRELMTE).

This sequence belongs to the bacterial secretin family. GSP D subfamily. As to quaternary structure, forms a cylindrical channel with 15 subunits. The closed pentadecameric channel is 170 Angstroms long and 140 Angstroms in diameter.

It localises to the cell outer membrane. Functionally, involved in a type II secretion system (T2SS, formerly general secretion pathway, GSP) for the export of proteins. This subunit forms the outer membrane channel. Among its substrates are PrpL, elastase LasB, chitin binding protein D (CbpD), aminopeptidase PaAP, and metalloprotease ImpA. This is Secretin XcpQ from Pseudomonas aeruginosa (strain ATCC 15692 / DSM 22644 / CIP 104116 / JCM 14847 / LMG 12228 / 1C / PRS 101 / PAO1).